The sequence spans 489 residues: Cobyric acid synthase (489 aa).

Positions 252-441 (ALTIGVIQLP…IHGIFANTEF (190 aa)) constitute a GATase cobBQ-type domain. Cys330 (nucleophile) is an active-site residue. His433 is a catalytic residue.

It belongs to the CobB/CobQ family. CobQ subfamily.

It participates in cofactor biosynthesis; adenosylcobalamin biosynthesis. Catalyzes amidations at positions B, D, E, and G on adenosylcobyrinic A,C-diamide. NH(2) groups are provided by glutamine, and one molecule of ATP is hydrogenolyzed for each amidation. This Herpetosiphon aurantiacus (strain ATCC 23779 / DSM 785 / 114-95) protein is Cobyric acid synthase.